The chain runs to 407 residues: Aurora kinase A-A (407 aa).

Residues 1–10 show a composition bias toward basic and acidic residues; sequence MERAVKENHK. A disordered region spans residues 1–130; sequence MERAVKENHK…KTSAVPKEEG (130 aa). 2 stretches are compositionally biased toward polar residues: residues 67-77 and 84-110; these read ILSSQKPTTQI and QGHQSSKPQGPNENRNPQQTSHSSTPN. Residues 140-390 enclose the Protein kinase domain; sequence FEIGRPLGKG…LKGVLEHPWI (251 aa). Residues lysine 150, lysine 169, and 217-220 each bind ATP; that span reads LDYA. The active-site Proton acceptor is aspartate 263. Residue aspartate 281 participates in ATP binding. The interval 287–300 is activation segment; sequence HAPSSRRTTLCGTL.

This sequence belongs to the protein kinase superfamily. Ser/Thr protein kinase family. Aurora subfamily. As to quaternary structure, interacts with kif2c and kif11. Post-translationally, phosphorylated. Autophosphorylated on a serine residue. In terms of tissue distribution, highly expressed in ovary and testis.

Its subcellular location is the cytoplasm. The protein localises to the cytoskeleton. It is found in the spindle. It localises to the microtubule organizing center. The protein resides in the centrosome. The catalysed reaction is L-seryl-[protein] + ATP = O-phospho-L-seryl-[protein] + ADP + H(+). It carries out the reaction L-threonyl-[protein] + ATP = O-phospho-L-threonyl-[protein] + ADP + H(+). Functionally, mitotic serine/threonine kinases that contributes to the regulation of cell cycle progression. Associates with the centrosome and the spindle microtubules during mitosis and plays a critical role in various mitotic events including the establishment of mitotic spindle, centrosome duplication, centrosome separation as well as maturation, chromosomal alignment, spindle assembly checkpoint, and cytokinesis. Phosphorylates numerous target proteins. Important for microtubule formation and/or stabilization. The polypeptide is Aurora kinase A-A (aurka-a) (Xenopus laevis (African clawed frog)).